Here is an 832-residue protein sequence, read N- to C-terminus: SID1 transmembrane family member 2 (832 aa).

A signal peptide spans 1–18; sequence MIAWRLPLCVLLVASVES. The Extracellular segment spans residues 19-293; sequence HLGALGPKNV…VSQAVTSEAY (275 aa). N-linked (GlcNAc...) asparagine glycosylation is found at asparagine 27, asparagine 54, asparagine 60, asparagine 123, asparagine 141, and asparagine 165. A helical membrane pass occupies residues 294–314; it reads VGGMLFCLGIFLSFYLLTVLL. Over 315 to 447 the chain is Cytoplasmic; that stretch reads ACWENWRQRK…DKRVLRKKYQ (133 aa). 3 positions are modified to phosphoserine: serine 401, serine 403, and serine 404. A helical transmembrane segment spans residues 448–468; it reads IYFWNIATIAVFYALPVVQLV. The Extracellular portion of the chain corresponds to 469–499; sequence ITYQTVVNVTGNQDICYYNFLCAHPLGNLSA. N-linked (GlcNAc...) asparagine glycans are attached at residues asparagine 476 and asparagine 496. The helical transmembrane segment at 500-520 threads the bilayer; it reads FNNILSNLGYILLGLLFLLII. Residues 521–546 lie on the Cytoplasmic side of the membrane; sequence LQREINHNRALLRNDLYALECGIPKH. Residues 547-567 form a helical membrane-spanning segment; it reads FGLFYAMGTALMMEGLLSACY. At 568-605 the chain is on the extracellular side; it reads HVCPNYTNFQFDTSFMYMIAGLCMLKLYQKRHPDINAS. Residues asparagine 572 and asparagine 603 are each glycosylated (N-linked (GlcNAc...) asparagine). A helical membrane pass occupies residues 606–626; sequence AYSAYACLAIVIFFSVLGVVF. Residues 627–631 lie on the Cytoplasmic side of the membrane; that stretch reads GKGNT. The helical transmembrane segment at 632 to 652 threads the bilayer; sequence AFWIVFSVIHIISTLLLSTQL. At 653–688 the chain is on the extracellular side; it reads YYMGRWKLDSGIFRRILHVLYTDCIRQCSGPLYTDR. Residues 689 to 709 form a helical membrane-spanning segment; it reads MVLLVMGNIINWSLAAYGLIM. Residues 710–715 are Cytoplasmic-facing; that stretch reads RPNDFA. Residues 716-736 form a helical membrane-spanning segment; it reads SYLLAIGICNLLLYFAFYIIM. The Extracellular segment spans residues 737–746; sequence KLRSGERIKL. The helical transmembrane segment at 747-767 threads the bilayer; that stretch reads IPLLCIVCTSVVWGFALFFFF. Residues 768 to 796 lie on the Cytoplasmic side of the membrane; the sequence is QGLSTWQKTPAESREHNRDCILLDFFDDH. The helical transmembrane segment at 797 to 817 threads the bilayer; the sequence is DIWHFLSSIAMFGSFLVLLTL. The Extracellular portion of the chain corresponds to 818-832; the sequence is DDDLDTVQRDKIYVF.

It belongs to the SID1 family. In terms of assembly, interacts with adapter protein complex 1 (AP-1) and AP-2, but not AP-3 and AP-4. Interacts with LAMP2. Post-translationally, glycosylated. Widely expressed, including in the liver, brain and kidney (at protein level).

It is found in the lysosome membrane. It localises to the cell membrane. Its function is as follows. Mediates the translocation of RNA and DNA across the lysosomal membrane during RNA and DNA autophagy (RDA), a process in which RNA and DNA is directly imported into lysosomes in an ATP-dependent manner, and degraded. Involved in the uptake of single-stranded oligonucleotides by living cells, a process called gymnosis. In vitro, mediates the uptake of linear DNA more efficiently than that of circular DNA, but exhibits similar uptake efficacy toward RNA and DNA. Binds long double-stranded RNA (dsRNA) (500 - 700 base pairs), but not dsRNA shorter than 100 bp. The sequence is that of SID1 transmembrane family member 2 (Sidt2) from Mus musculus (Mouse).